The chain runs to 318 residues: Transaldolase (318 aa).

Residue Lys132 is the Schiff-base intermediate with substrate of the active site.

This sequence belongs to the transaldolase family. Type 1 subfamily. Homodimer.

The protein localises to the cytoplasm. The enzyme catalyses D-sedoheptulose 7-phosphate + D-glyceraldehyde 3-phosphate = D-erythrose 4-phosphate + beta-D-fructose 6-phosphate. Its pathway is carbohydrate degradation; pentose phosphate pathway; D-glyceraldehyde 3-phosphate and beta-D-fructose 6-phosphate from D-ribose 5-phosphate and D-xylulose 5-phosphate (non-oxidative stage): step 2/3. In terms of biological role, transaldolase is important for the balance of metabolites in the pentose-phosphate pathway. This chain is Transaldolase, found in Shewanella loihica (strain ATCC BAA-1088 / PV-4).